The sequence spans 209 residues: Kynurenine formamidase (209 aa).

Tryptophan 18 is a substrate binding site. 3 residues coordinate Zn(2+): histidine 48, histidine 52, and aspartate 54. Histidine 58 serves as the catalytic Proton donor/acceptor. Zn(2+) contacts are provided by histidine 160 and glutamate 172.

This sequence belongs to the Cyclase 1 superfamily. KynB family. Homodimer. Requires Zn(2+) as cofactor.

The enzyme catalyses N-formyl-L-kynurenine + H2O = L-kynurenine + formate + H(+). The protein operates within amino-acid degradation; L-tryptophan degradation via kynurenine pathway; L-kynurenine from L-tryptophan: step 2/2. In terms of biological role, catalyzes the hydrolysis of N-formyl-L-kynurenine to L-kynurenine, the second step in the kynurenine pathway of tryptophan degradation. The polypeptide is Kynurenine formamidase (Sphingopyxis alaskensis (strain DSM 13593 / LMG 18877 / RB2256) (Sphingomonas alaskensis)).